A 1057-amino-acid chain; its full sequence is Histone deacetylase complex subunit SAP130 (1057 aa).

Residues 1–69 (MSSQQFPRLG…LPPREEKQEP (69 aa)) are disordered. Residues 14-28 (PGLSQPPSQIASSGS) show a composition bias toward polar residues. The span at 41-54 (EAGRDADVGTREHV) shows a compositional bias: basic and acidic residues. Arg206 is subject to Omega-N-methylarginine. A Phosphothreonine modification is found at Thr329. Phosphoserine occurs at positions 416 and 439. Disordered stretches follow at residues 619-695 (TTVV…KSEV) and 718-740 (PTVA…IAAA). The span at 620–641 (TVVQTHSQSASTNTPAQGSSPR) shows a compositional bias: polar residues. Lys794 is covalently cross-linked (Glycyl lysine isopeptide (Lys-Gly) (interchain with G-Cter in SUMO2)). The interval 827–873 (NLSMPPSDLPPGASPRKKPRKQQHVISTEEGDMMETNSTDDEKSAAK) is disordered. Positions 845–1057 (PRKQQHVIST…VSKLKRKEKV (213 aa)) are interactions with SIN3A and HDAC1. Ser864 is subject to Phosphoserine. Phosphothreonine is present on Thr865. Glycyl lysine isopeptide (Lys-Gly) (interchain with G-Cter in SUMO2) cross-links involve residues Lys873 and Lys878. Ser884 is modified (phosphoserine).

Belongs to the SAP130 family. As to quaternary structure, component of a mSin3A corepressor complex that contains SIN3A, SAP130, SUDS3/SAP45, ARID4B/SAP180, HDAC1 and HDAC2. Interacts (released by dead or dying cells) with CLEC4E. In terms of processing, acetylated. Sumoylated with SUMO1.

It localises to the nucleus. Functionally, acts as a transcriptional repressor. May function in the assembly and/or enzymatic activity of the mSin3A corepressor complex or in mediating interactions between the complex and other regulatory complexes. In Mus musculus (Mouse), this protein is Histone deacetylase complex subunit SAP130 (Sap130).